A 571-amino-acid polypeptide reads, in one-letter code: Glutamine--tRNA ligase (571 aa).

Residues 35–45 (PEPNGYLHIGH) carry the 'HIGH' region motif. ATP contacts are provided by residues 36–38 (EPN) and 42–48 (HIGHAKS). 2 residues coordinate L-glutamine: aspartate 68 and tyrosine 213. ATP-binding positions include threonine 232, 262–263 (RL), and 270–272 (LSK). The 'KMSKS' region signature appears at 269–273 (ILSKR).

Belongs to the class-I aminoacyl-tRNA synthetase family. Monomer.

The protein localises to the cytoplasm. The catalysed reaction is tRNA(Gln) + L-glutamine + ATP = L-glutaminyl-tRNA(Gln) + AMP + diphosphate. In Buchnera aphidicola subsp. Acyrthosiphon pisum (strain 5A), this protein is Glutamine--tRNA ligase.